Consider the following 496-residue polypeptide: Probable malate:quinone oxidoreductase (496 aa).

It belongs to the MQO family. Requires FAD as cofactor.

The enzyme catalyses (S)-malate + a quinone = a quinol + oxaloacetate. It functions in the pathway carbohydrate metabolism; tricarboxylic acid cycle; oxaloacetate from (S)-malate (quinone route): step 1/1. This is Probable malate:quinone oxidoreductase from Prochlorococcus marinus (strain MIT 9313).